Here is a 175-residue protein sequence, read N- to C-terminus: MALREIIILPDKRLREISKPVAEVTPEIRKLADDMFESMYDAPGIGLAAIQIAEPVRLITMDIVRKEGNGKSDPRAFINPEIVGASAEMNVYEEGCLSIPEYYADVERPAVVRIRYTDLDGNVKEEDADGLFATCIQHEIDHLDGVLFVDHLSKLKRAMVVRKFEKAAKRGIKYV.

Fe cation is bound by residues C96 and H138. E139 is a catalytic residue. Fe cation is bound at residue H142.

Belongs to the polypeptide deformylase family. Requires Fe(2+) as cofactor.

It catalyses the reaction N-terminal N-formyl-L-methionyl-[peptide] + H2O = N-terminal L-methionyl-[peptide] + formate. In terms of biological role, removes the formyl group from the N-terminal Met of newly synthesized proteins. Requires at least a dipeptide for an efficient rate of reaction. N-terminal L-methionine is a prerequisite for activity but the enzyme has broad specificity at other positions. The chain is Peptide deformylase from Rhodopseudomonas palustris (strain BisB5).